Reading from the N-terminus, the 166-residue chain is Peptide deformylase (166 aa).

C88 and H130 together coordinate Fe cation. E131 is a catalytic residue. H134 contributes to the Fe cation binding site.

Belongs to the polypeptide deformylase family. Fe(2+) is required as a cofactor.

It catalyses the reaction N-terminal N-formyl-L-methionyl-[peptide] + H2O = N-terminal L-methionyl-[peptide] + formate. Functionally, removes the formyl group from the N-terminal Met of newly synthesized proteins. Requires at least a dipeptide for an efficient rate of reaction. N-terminal L-methionine is a prerequisite for activity but the enzyme has broad specificity at other positions. This chain is Peptide deformylase, found in Caldicellulosiruptor bescii (strain ATCC BAA-1888 / DSM 6725 / KCTC 15123 / Z-1320) (Anaerocellum thermophilum).